The sequence spans 83 residues: Consomatin Rs1 (83 aa).

Residues 1 to 22 (MQTAYWVMVMMMVWITAPLSEG) form the signal peptide. Residues 23–55 (GKLNNVIRGLVPDDVTPKRISQSLISRRRFDSR) constitute a propeptide that is removed on maturation. Cys62 and Cys67 form a disulfide bridge. Trp64 is modified (D-tryptophan). Pro68 carries the 4-hydroxyproline modification. The propeptide occupies 71-83 (LHGDNYDLKEKDK).

Belongs to the conotoxin C superfamily. Consomatin family. In terms of tissue distribution, expressed by the venom duct.

Its subcellular location is the secreted. Functionally, moderately activates human somatostatin receptors (SSTR) with a preferential activation of SSTR1 and SSTR4. In vivo, does not cause behavioral changes in mice within a few minutes of intracranial injection, but causes a progressive loss of movement thereafter. Four to five hours after injection, mice recover, even with the highest dose tested. Shows antinociception and antihyperalgesia activities in two mouse models of acute pain, most probably by acting outside the central nervous system. The protein is Consomatin Rs1 of Conus raulsilvai (Sea snail).